Reading from the N-terminus, the 2115-residue chain is Non-reducing polyketide synthase PFUR17_0229 (2115 aa).

Residues 8–246 form an N-terminal acylcarrier protein transacylase (SAT) domain (SAT) region; that stretch reads VLFGDQTVDP…ISLPITAAFH (239 aa). Residues 367–796 form the Ketosynthase family 3 (KS3) domain; it reads SGDIAIVGVA…GGNTSLVLED (430 aa). Residues C539, H674, and H713 each act as for beta-ketoacyl synthase activity in the active site. The segment at 895–1218 is malonyl-CoA:ACP transacylase (MAT) domain; it reads IFAFTGQGAQ…SISNAYNSGA (324 aa). The product template (PT) domain stretch occupies residues 1279–1592; sequence TTCLQKVESE…KRNILQSLLS (314 aa). The N-terminal hotdog fold stretch occupies residues 1282–1413; the sequence is LQKVESETFT…CTVMYGDGQQ (132 aa). Positions 1282-1588 constitute a PKS/mFAS DH domain; that stretch reads LQKVESETFT…FQKMKRNILQ (307 aa). The active-site Proton acceptor; for dehydratase activity is H1315. The C-terminal hotdog fold stretch occupies residues 1441–1588; sequence VHRLLKEMIY…FQKMKRNILQ (148 aa). Catalysis depends on D1501, which acts as the Proton donor; for dehydratase activity. Positions 1594 to 1613 are disordered; it reads GHEETPPARPVPSKRTVQGS. Residues 1626–1703 form the Carrier 1 domain; the sequence is KAASGGFSNI…QLRNFFLDKV (78 aa). Residue S1663 is modified to O-(pantetheine 4'-phosphoryl)serine. Residues 1710–1742 are disordered; that stretch reads FDDEESEMSSSTAGSTPGSSTSHGNQNTTVTTP. Residues 1718 to 1733 show a composition bias toward low complexity; the sequence is SSSTAGSTPGSSTSHG. Positions 1742-1819 constitute a Carrier 2 domain; sequence PAEPDVVAIL…DVQKALGVPS (78 aa). O-(pantetheine 4'-phosphoryl)serine is present on S1779. The thioesterase (TE) domain stretch occupies residues 1861-2097; sequence LFLLPDGAGS…VVGGNHFSIM (237 aa).

The cofactor is pantetheine 4'-phosphate.

It catalyses the reaction 6 malonyl-CoA + 2 acetyl-CoA + 5 H(+) = o-orsellinate depside + 6 CO2 + 8 CoA + H2O. Functionally, non-reducing polyketide synthase; part of a gene cluster that mediates the biosynthesis of a yet unidentified depside/depsidone compound. The first step in the pathway is performed by the PKS PFUR17_0229 that condenses 2 acetyl-CoA starter units with 6 malonyl-CoA units to produce lecanoric acid (LA), also known as orsellinate depside. The biosynthesis occurs via the formation of 2 orsellinate intermediates fused together by the C-terminal thioesterase (TE) domain that finally releases lecanoric acid. In addition to the PKS gene, the PFUR17 gene cluster contains closely linked genes encoding a cytochrome P-450 and a laccase (phenol oxidase), directly upstream and downstream respectively, so it is likely that lecanoric acid is an intermediate in a longer biosynthetic pathway. The chain is Non-reducing polyketide synthase PFUR17_0229 from Pseudevernia furfuracea (Tree moss).